Here is a 239-residue protein sequence, read N- to C-terminus: MPRSKRSKLVTLAQTDKKGRENKERIFDEVREALDTYKYVFVLQLDDVRTPVLQEIREAWVGSKLLMGKRKVLEKALGTTREQEYKENLSKLTKYCSGVIGLLFTNETLDTVKEYFEAYSRLDYSRPNSRAPITFEVPEGIVYSRGGQIPIEEDVPMAHSLEPTLRNKYEMPTKIKAGKITLEAPYLVCKEGQKLDVRQALILKQFGVALAQFKVIISAYYDNESSTVSELNINKKQDA.

Belongs to the universal ribosomal protein uL10 family. As to quaternary structure, associates with the pre-60S ribosomal particle.

Its subcellular location is the nucleus. It localises to the nucleolus. The protein resides in the cytoplasm. Component of the ribosome assembly machinery. Nuclear paralog of the ribosomal protein P0, it binds pre-60S subunits at an early stage of assembly in the nucleolus, and is replaced by P0 in cytoplasmic pre-60S subunits and mature 80S ribosomes. The protein is Ribosome assembly factor mrt4 of Candida glabrata (strain ATCC 2001 / BCRC 20586 / JCM 3761 / NBRC 0622 / NRRL Y-65 / CBS 138) (Yeast).